The following is a 130-amino-acid chain: Small ribosomal subunit protein uS8 (130 aa).

It belongs to the universal ribosomal protein uS8 family. In terms of assembly, part of the 30S ribosomal subunit. Contacts proteins S5 and S12.

In terms of biological role, one of the primary rRNA binding proteins, it binds directly to 16S rRNA central domain where it helps coordinate assembly of the platform of the 30S subunit. This is Small ribosomal subunit protein uS8 from Shewanella sp. (strain MR-7).